A 177-amino-acid polypeptide reads, in one-letter code: Large ribosomal subunit protein uL6 (177 aa).

It belongs to the universal ribosomal protein uL6 family. In terms of assembly, part of the 50S ribosomal subunit.

This protein binds to the 23S rRNA, and is important in its secondary structure. It is located near the subunit interface in the base of the L7/L12 stalk, and near the tRNA binding site of the peptidyltransferase center. In Sinorhizobium fredii (strain NBRC 101917 / NGR234), this protein is Large ribosomal subunit protein uL6.